A 228-amino-acid polypeptide reads, in one-letter code: Ribonuclease 3 (228 aa).

Residues 5 to 127 enclose the RNase III domain; sequence LTALQERLKH…LIGAVYLDAG (123 aa). A Mg(2+)-binding site is contributed by Glu40. The active site involves Asp44. The Mg(2+) site is built by Asp113 and Glu116. Glu116 is a catalytic residue. Positions 154-224 constitute a DRBM domain; sequence DPKTELQEWL…AAAMLIRLKA (71 aa).

The protein belongs to the ribonuclease III family. Homodimer. Requires Mg(2+) as cofactor.

Its subcellular location is the cytoplasm. It catalyses the reaction Endonucleolytic cleavage to 5'-phosphomonoester.. Digests double-stranded RNA. Involved in the processing of primary rRNA transcript to yield the immediate precursors to the large and small rRNAs (23S and 16S). Processes some mRNAs, and tRNAs when they are encoded in the rRNA operon. Processes pre-crRNA and tracrRNA of type II CRISPR loci if present in the organism. The protein is Ribonuclease 3 of Variovorax paradoxus (strain S110).